Consider the following 104-residue polypeptide: MHGNIINIEDVILDLVPQPEIDLRCYEQLDYEQFDSSDEDETDNMRDQQARQAGQEVCYRIEAQCCMCNSIVQLAVQSSRQNVRVLEQMLMEDVSLVCHQCAAQ.

The E7 terminal domain stretch occupies residues 1-47; sequence MHGNIINIEDVILDLVPQPEIDLRCYEQLDYEQFDSSDEDETDNMRD. The LXCXE motif; interaction with host RB1 and TMEM173/STING motif lies at 23 to 27; sequence LRCYE. The segment at 65 to 101 is a zinc-finger region; sequence CCMCNSIVQLAVQSSRQNVRVLEQMLMEDVSLVCHQC. A Nuclear export signal motif is present at residues 83 to 91; the sequence is VRVLEQMLM.

The protein belongs to the papillomaviridae E7 protein family. As to quaternary structure, homodimer. Homooligomer. Interacts with host RB1; this interaction induces dissociation of RB1-E2F1 complex thereby disrupting RB1 activity. Interacts with host EP300; this interaction represses EP300 transcriptional activity. Interacts with protein E2; this interaction inhibits E7 oncogenic activity. Interacts with host TMEM173/STING; this interaction impairs the ability of TMEM173/STING to sense cytosolic DNA and promote the production of type I interferon (IFN-alpha and IFN-beta). In terms of processing, highly phosphorylated.

The protein localises to the host cytoplasm. The protein resides in the host nucleus. In terms of biological role, plays a role in viral genome replication by driving entry of quiescent cells into the cell cycle. Stimulation of progression from G1 to S phase allows the virus to efficiently use the cellular DNA replicating machinery to achieve viral genome replication. E7 protein has both transforming and trans-activating activities. Induces the disassembly of the E2F1 transcription factor from RB1, with subsequent transcriptional activation of E2F1-regulated S-phase genes. Interferes with host histone deacetylation mediated by HDAC1 and HDAC2, leading to transcription activation. Also plays a role in the inhibition of both antiviral and antiproliferative functions of host interferon alpha. Interaction with host TMEM173/STING impairs the ability of TMEM173/STING to sense cytosolic DNA and promote the production of type I interferon (IFN-alpha and IFN-beta). The polypeptide is Protein E7 (Human papillomavirus type 26).